We begin with the raw amino-acid sequence, 581 residues long: NADH-quinone oxidoreductase subunit C/D (581 aa).

Residues M1–F172 form an NADH dehydrogenase I subunit C region. Residues E196–R581 are NADH dehydrogenase I subunit D.

The protein in the N-terminal section; belongs to the complex I 30 kDa subunit family. In the C-terminal section; belongs to the complex I 49 kDa subunit family. In terms of assembly, NDH-1 is composed of 13 different subunits. Subunits NuoB, CD, E, F, and G constitute the peripheral sector of the complex.

It is found in the cell inner membrane. It carries out the reaction a quinone + NADH + 5 H(+)(in) = a quinol + NAD(+) + 4 H(+)(out). Functionally, NDH-1 shuttles electrons from NADH, via FMN and iron-sulfur (Fe-S) centers, to quinones in the respiratory chain. The immediate electron acceptor for the enzyme in this species is believed to be ubiquinone. Couples the redox reaction to proton translocation (for every two electrons transferred, four hydrogen ions are translocated across the cytoplasmic membrane), and thus conserves the redox energy in a proton gradient. The polypeptide is NADH-quinone oxidoreductase subunit C/D (Rhodopseudomonas palustris (strain TIE-1)).